Reading from the N-terminus, the 359-residue chain is 5-amino-6-(D-ribitylamino)uracil--L-tyrosine 4-hydroxyphenyl transferase (359 aa).

A Radical SAM core domain is found at 45-282 (VTYVVNANIN…VYAISRIFFK (238 aa)). [4Fe-4S] cluster is bound by residues Cys-59, Cys-63, and Cys-66.

This sequence belongs to the radical SAM superfamily. CofH family. As to quaternary structure, consists of two subunits, CofG and CofH. The cofactor is [4Fe-4S] cluster.

It carries out the reaction 5-amino-6-(D-ribitylamino)uracil + L-tyrosine + S-adenosyl-L-methionine = 5-amino-5-(4-hydroxybenzyl)-6-(D-ribitylimino)-5,6-dihydrouracil + 2-iminoacetate + 5'-deoxyadenosine + L-methionine + H(+). Its pathway is cofactor biosynthesis; coenzyme F0 biosynthesis. Its function is as follows. Catalyzes the radical-mediated synthesis of 5-amino-5-(4-hydroxybenzyl)-6-(D-ribitylimino)-5,6-dihydrouracil from 5-amino-6-(D-ribitylamino)uracil and L-tyrosine. This chain is 5-amino-6-(D-ribitylamino)uracil--L-tyrosine 4-hydroxyphenyl transferase, found in Methanococcus maripaludis (strain C7 / ATCC BAA-1331).